Reading from the N-terminus, the 295-residue chain is MKIAVYGKGGIGKSTTSCNISIALARRGKKVLQIGCDPKHDSTFTLTGFLIPTIIDTLQLKDYHYEDVWPEDVIYKGYGGVDCVEAGGPPAGAGCGGYVVGETVKLLKELNAFYEYDIILFDVLGDVVCGGFAAPLNYADYCIIITDNGFDALFAANRIAASVREKARTHPLRLAGLVGNRTSKRDLIDKYVEACPMPVLEVLPLIEDIRVSRVKGKTLFEMVESQPSLNYVCDFYLNIADQILSQPEGIVPKEVPDRELFSLLSDFYLNPVDKTKDKKENKKEDKENSADFTWL.

Residues 10–15 (GIGKST) and lysine 39 each bind ATP. A Mg(2+)-binding site is contributed by serine 14. 2 residues coordinate [4Fe-4S] cluster: cysteine 95 and cysteine 129. Residue 180-181 (NR) participates in ATP binding. The span at 275–289 (TKDKKENKKEDKENS) shows a compositional bias: basic and acidic residues. Residues 275–295 (TKDKKENKKEDKENSADFTWL) form a disordered region.

The protein belongs to the NifH/BchL/ChlL family. In terms of assembly, homodimer. Protochlorophyllide reductase is composed of three subunits; ChlL, ChlN and ChlB. [4Fe-4S] cluster serves as cofactor.

The protein localises to the plastid. Its subcellular location is the chloroplast. The catalysed reaction is chlorophyllide a + oxidized 2[4Fe-4S]-[ferredoxin] + 2 ADP + 2 phosphate = protochlorophyllide a + reduced 2[4Fe-4S]-[ferredoxin] + 2 ATP + 2 H2O. Its pathway is porphyrin-containing compound metabolism; chlorophyll biosynthesis (light-independent). Its function is as follows. Component of the dark-operative protochlorophyllide reductase (DPOR) that uses Mg-ATP and reduced ferredoxin to reduce ring D of protochlorophyllide (Pchlide) to form chlorophyllide a (Chlide). This reaction is light-independent. The L component serves as a unique electron donor to the NB-component of the complex, and binds Mg-ATP. This is Light-independent protochlorophyllide reductase iron-sulfur ATP-binding protein from Physcomitrium patens (Spreading-leaved earth moss).